Here is a 312-residue protein sequence, read N- to C-terminus: UDP-N-acetylenolpyruvoylglucosamine reductase (312 aa).

Positions 33–199 constitute an FAD-binding PCMH-type domain; the sequence is RVGGKAEWYC…TGATLQLLPG (167 aa). The active site involves R178. The active-site Proton donor is the S229. Residue E299 is part of the active site.

It belongs to the MurB family. Requires FAD as cofactor.

The protein resides in the cytoplasm. The enzyme catalyses UDP-N-acetyl-alpha-D-muramate + NADP(+) = UDP-N-acetyl-3-O-(1-carboxyvinyl)-alpha-D-glucosamine + NADPH + H(+). It functions in the pathway cell wall biogenesis; peptidoglycan biosynthesis. Cell wall formation. The polypeptide is UDP-N-acetylenolpyruvoylglucosamine reductase (Synechococcus sp. (strain JA-3-3Ab) (Cyanobacteria bacterium Yellowstone A-Prime)).